We begin with the raw amino-acid sequence, 526 residues long: Probable feruloyl esterase B (526 aa).

Positions 1–18 are cleaved as a signal peptide; it reads MARLSLLTLLALGSAALA. Intrachain disulfides connect cysteine 27–cysteine 74 and cysteine 62–cysteine 113. Asparagine 137 carries an N-linked (GlcNAc...) asparagine glycan. 4 disulfide bridges follow: cysteine 186–cysteine 441, cysteine 255–cysteine 272, cysteine 281–cysteine 291, and cysteine 503–cysteine 525. Serine 187 acts as the Acyl-ester intermediate in catalysis. An N-linked (GlcNAc...) asparagine glycan is attached at asparagine 233. Residues aspartate 256, aspartate 259, alanine 261, aspartate 263, and isoleucine 265 each contribute to the Ca(2+) site. Residue asparagine 311 is glycosylated (N-linked (GlcNAc...) asparagine). Residues aspartate 400 and histidine 440 each act as charge relay system in the active site. Asparagine 516 carries an N-linked (GlcNAc...) asparagine glycan.

It belongs to the tannase family.

The protein resides in the secreted. The catalysed reaction is feruloyl-polysaccharide + H2O = ferulate + polysaccharide.. Involved in degradation of plant cell walls. Hydrolyzes the feruloyl-arabinose ester bond in arabinoxylans as well as the feruloyl-galactose and feruloyl-arabinose ester bonds in pectin. The chain is Probable feruloyl esterase B (faeB) from Aspergillus clavatus (strain ATCC 1007 / CBS 513.65 / DSM 816 / NCTC 3887 / NRRL 1 / QM 1276 / 107).